Consider the following 282-residue polypeptide: Aquaporin PIP2-7 (282 aa).

A disordered region spans residues 1-21 (MSKEVSVEGEQPPVKDYTDPP). Over 1-38 (MSKEVSVEGEQPPVKDYTDPPPEPLLNFGELRLWSFYR) the chain is Cytoplasmic. The helical transmembrane segment at 39 to 59 (ALIAEFVATLLFLYVTIATVI) threads the bilayer. The Extracellular segment spans residues 60-71 (GHKEQNAADQCS). Residues 72 to 92 (GVGLLGIAWAFGGMIFILVYC) form a helical membrane-spanning segment. The Cytoplasmic segment spans residues 93–120 (TAGISGGHINPAVTLGLFLARKVSLIRA). An NPA 1 motif is present at residues 102–104 (NPA). Residues 121–141 (LLYMVAQCLGAIVGVGIVKGI) form a helical membrane-spanning segment. Topologically, residues 142 to 162 (MKHQYNSLGGGANVVAAGYSK) are extracellular. Residues 163-183 (GTALGAEIIGTFVLVYTVFSA) traverse the membrane as a helical segment. The Cytoplasmic segment spans residues 184–196 (TDPKRSARDSHVP). Residues 197 to 217 (VLAPLPIGFAVFMVHLATIPI) traverse the membrane as a helical segment. The Extracellular segment spans residues 218–244 (TGTGINPARSLGAAVIYNQDKPWDDHW). An NPA 2 motif is present at residues 223-225 (NPA). Residues 245–265 (ILWVGPFVGALAAAAYHQYIL) traverse the membrane as a helical segment. At 266 to 282 (RAAAIKALGSFRSNPSN) the chain is on the cytoplasmic side.

It belongs to the MIP/aquaporin (TC 1.A.8) family. PIP (TC 1.A.8.11) subfamily. In terms of tissue distribution, expressed in roots, leaves and fruits.

Its subcellular location is the cell membrane. Water channel required to facilitate the transport of water across cell membrane; mercury-insensitive. Contributes to the tolerance to multiple abiotic stresses including salt (NaCl), cold and water deprivation, by modulating cytosolic K(+)/Na(+) ratio, maintaining osmotic balance, and reducing membrane injury (e.g. oxidative injury). Also regulates the expression of abscisic acid (ABA)- biosynthetic and -responsive genes during dehydration and salt stresses. This Musa acuminata (Banana) protein is Aquaporin PIP2-7.